The chain runs to 91 residues: Small ribosomal subunit protein uS15 (91 aa).

It belongs to the universal ribosomal protein uS15 family. As to quaternary structure, part of the 30S ribosomal subunit. Forms a bridge to the 50S subunit in the 70S ribosome, contacting the 23S rRNA.

Functionally, one of the primary rRNA binding proteins, it binds directly to 16S rRNA where it helps nucleate assembly of the platform of the 30S subunit by binding and bridging several RNA helices of the 16S rRNA. In terms of biological role, forms an intersubunit bridge (bridge B4) with the 23S rRNA of the 50S subunit in the ribosome. This chain is Small ribosomal subunit protein uS15, found in Rickettsia felis (strain ATCC VR-1525 / URRWXCal2) (Rickettsia azadi).